A 177-amino-acid chain; its full sequence is ATP synthase subunit delta 1 (177 aa).

It belongs to the ATPase delta chain family. As to quaternary structure, F-type ATPases have 2 components, F(1) - the catalytic core - and F(0) - the membrane proton channel. F(1) has five subunits: alpha(3), beta(3), gamma(1), delta(1), epsilon(1). F(0) has three main subunits: a(1), b(2) and c(10-14). The alpha and beta chains form an alternating ring which encloses part of the gamma chain. F(1) is attached to F(0) by a central stalk formed by the gamma and epsilon chains, while a peripheral stalk is formed by the delta and b chains.

The protein localises to the cell inner membrane. Its function is as follows. F(1)F(0) ATP synthase produces ATP from ADP in the presence of a proton or sodium gradient. F-type ATPases consist of two structural domains, F(1) containing the extramembraneous catalytic core and F(0) containing the membrane proton channel, linked together by a central stalk and a peripheral stalk. During catalysis, ATP synthesis in the catalytic domain of F(1) is coupled via a rotary mechanism of the central stalk subunits to proton translocation. Functionally, this protein is part of the stalk that links CF(0) to CF(1). It either transmits conformational changes from CF(0) to CF(1) or is implicated in proton conduction. The sequence is that of ATP synthase subunit delta 1 from Vibrio atlanticus (strain LGP32) (Vibrio splendidus (strain Mel32)).